The chain runs to 217 residues: Transcriptional regulator NovE (217 aa).

The tract at residues 1–41 (MVASGRTASKGRGNGATPVRPTAGDATPVDSGQPSDTTYGG) is disordered.

In terms of biological role, transcription regulator that specifically regulates expression of genes involved in the novobiocin biosynthesis pathway. Probably acts as a positive regulator of transcription. Does not bind DNA. The protein is Transcriptional regulator NovE (novE) of Streptomyces niveus (Streptomyces spheroides).